Consider the following 280-residue polypeptide: Bifunctional protein FolD (280 aa).

NADP(+)-binding positions include 165–167 (GRS), Ser190, and Ile231.

The protein belongs to the tetrahydrofolate dehydrogenase/cyclohydrolase family. Homodimer.

The catalysed reaction is (6R)-5,10-methylene-5,6,7,8-tetrahydrofolate + NADP(+) = (6R)-5,10-methenyltetrahydrofolate + NADPH. It catalyses the reaction (6R)-5,10-methenyltetrahydrofolate + H2O = (6R)-10-formyltetrahydrofolate + H(+). The protein operates within one-carbon metabolism; tetrahydrofolate interconversion. Functionally, catalyzes the oxidation of 5,10-methylenetetrahydrofolate to 5,10-methenyltetrahydrofolate and then the hydrolysis of 5,10-methenyltetrahydrofolate to 10-formyltetrahydrofolate. The polypeptide is Bifunctional protein FolD (Moorella thermoacetica (strain ATCC 39073 / JCM 9320)).